Here is a 318-residue protein sequence, read N- to C-terminus: 4-diphosphocytidyl-2-C-methyl-D-erythritol kinase (318 aa).

Residue Lys25 is part of the active site. Residue 110–120 (PVAGGMAGGSA) coordinates ATP. The active site involves Asp152.

Belongs to the GHMP kinase family. IspE subfamily.

The enzyme catalyses 4-CDP-2-C-methyl-D-erythritol + ATP = 4-CDP-2-C-methyl-D-erythritol 2-phosphate + ADP + H(+). Its pathway is isoprenoid biosynthesis; isopentenyl diphosphate biosynthesis via DXP pathway; isopentenyl diphosphate from 1-deoxy-D-xylulose 5-phosphate: step 3/6. Its function is as follows. Catalyzes the phosphorylation of the position 2 hydroxy group of 4-diphosphocytidyl-2C-methyl-D-erythritol. This chain is 4-diphosphocytidyl-2-C-methyl-D-erythritol kinase, found in Mycobacterium tuberculosis (strain ATCC 25177 / H37Ra).